The sequence spans 170 residues: Large ribosomal subunit protein uL11 (170 aa).

This sequence belongs to the universal ribosomal protein uL11 family. In terms of assembly, part of the ribosomal stalk of the 50S ribosomal subunit. Interacts with L10 and the large rRNA to form the base of the stalk. L10 forms an elongated spine to which L12 dimers bind in a sequential fashion forming a multimeric L10(L12)X complex.

Its function is as follows. Forms part of the ribosomal stalk which helps the ribosome interact with GTP-bound translation factors. In Saccharolobus islandicus (strain M.14.25 / Kamchatka #1) (Sulfolobus islandicus), this protein is Large ribosomal subunit protein uL11.